A 514-amino-acid chain; its full sequence is 2,3-bisphosphoglycerate-independent phosphoglycerate mutase (514 aa).

Residues D14 and S64 each contribute to the Mn(2+) site. S64 acts as the Phosphoserine intermediate in catalysis. Substrate is bound by residues H125, R155–D156, R187, R193, R263–R266, and K336. Positions 403, 407, 444, 445, and 463 each coordinate Mn(2+).

The protein belongs to the BPG-independent phosphoglycerate mutase family. Monomer. Mn(2+) is required as a cofactor.

It catalyses the reaction (2R)-2-phosphoglycerate = (2R)-3-phosphoglycerate. It participates in carbohydrate degradation; glycolysis; pyruvate from D-glyceraldehyde 3-phosphate: step 3/5. Catalyzes the interconversion of 2-phosphoglycerate and 3-phosphoglycerate. The polypeptide is 2,3-bisphosphoglycerate-independent phosphoglycerate mutase (Escherichia coli O6:H1 (strain CFT073 / ATCC 700928 / UPEC)).